Reading from the N-terminus, the 614-residue chain is MLPIRWFLALLAVFLAVAGLDLWFSQTGARPSSATGEERLDGAAFLAAANAGELREGHIVYRANSTGLADLHAQRKGAAGAGATHVRATARLTDAEVTALRTQHFAEDDPVSYAAARAVSARERTASIVHAIVHPLGLITLIVGILFVVQRYAGRFTAFSAQRLRPVTSGVSFSSVAGCDEAKDEVYEVVEFLRDPARFRQTGGRMPKGVLLVGPPGTGKTMLAKAVAGEARANFYSLSGSDFVELYVGVGASRVRSLFKKARETAPSIIFIDEIDAIGRQRSAAESGGAQQEHDQTLNALLVAMDGFDSDDAVVVFGATNRPDTMDRALLRPGRFDRQVSVGLPDLRGRLAILQVHAGSVKLDPSVDLQEIAKATPGFSGADLANLLNEGAIHAARHRRATILHSDLDEARDKINWGRETRRVMTVQDKAVIAYHEAGHALMQVLSGEDVVRVQKVTIIPRGRSLGSTHFTPERDLFNYSQPQLIAKLRCLMAGRVAEEIALGSITSGASGDIQEATKTARQMVLEWGMSPLGFMALSRPDGDEPLASPQTFHEAERHVRALLDENYAATTRALTTHRAALDAIADELIRCETILGNDVRRIAAQHPPSALAG.

Residues 1–5 (MLPIR) lie on the Cytoplasmic side of the membrane. Residues 6–26 (WFLALLAVFLAVAGLDLWFSQ) form a helical membrane-spanning segment. Topologically, residues 27-127 (TGARPSSATG…AVSARERTAS (101 aa)) are periplasmic. The helical transmembrane segment at 128-148 (IVHAIVHPLGLITLIVGILFV) threads the bilayer. Over 149 to 614 (VQRYAGRFTA…AQHPPSALAG (466 aa)) the chain is Cytoplasmic. 214 to 221 (GPPGTGKT) lines the ATP pocket. Histidine 436 is a binding site for Zn(2+). The active site involves glutamate 437. 2 residues coordinate Zn(2+): histidine 440 and aspartate 513.

It in the central section; belongs to the AAA ATPase family. This sequence in the C-terminal section; belongs to the peptidase M41 family. Homohexamer. It depends on Zn(2+) as a cofactor.

It localises to the cell inner membrane. Functionally, acts as a processive, ATP-dependent zinc metallopeptidase for both cytoplasmic and membrane proteins. Plays a role in the quality control of integral membrane proteins. This Opitutus terrae (strain DSM 11246 / JCM 15787 / PB90-1) protein is ATP-dependent zinc metalloprotease FtsH.